The following is a 330-amino-acid chain: tRNA-modifying protein YgfZ (330 aa).

Folate is bound by residues tryptophan 28 and tryptophan 190.

Belongs to the tRNA-modifying YgfZ family.

The protein resides in the cytoplasm. In terms of biological role, folate-binding protein involved in regulating the level of ATP-DnaA and in the modification of some tRNAs. It is probably a key factor in regulatory networks that act via tRNA modification, such as initiation of chromosomal replication. In Yersinia pseudotuberculosis serotype O:1b (strain IP 31758), this protein is tRNA-modifying protein YgfZ.